The sequence spans 173 residues: GTP-dependent dephospho-CoA kinase (173 aa).

6 residues coordinate GTP: Asp52, Val53, Val54, Asp71, Lys73, and Asp122.

Belongs to the GTP-dependent DPCK family.

It catalyses the reaction 3'-dephospho-CoA + GTP = GDP + CoA + H(+). Its pathway is cofactor biosynthesis; coenzyme A biosynthesis. Its function is as follows. Catalyzes the GTP-dependent phosphorylation of the 3'-hydroxyl group of dephosphocoenzyme A to form coenzyme A (CoA). This chain is GTP-dependent dephospho-CoA kinase, found in Metallosphaera sedula (strain ATCC 51363 / DSM 5348 / JCM 9185 / NBRC 15509 / TH2).